Reading from the N-terminus, the 1870-residue chain is MDFSTMQVVVGFLKTSMGLQSIRDIVQKAKVDEKDKTLLHIHLCFFHANEMARDLNEGMDVSQIHSSAAIKYRAAIVTRHVKMNVETGGYDRKRMVEYNNETCVNWFSCEFKEEKEESQELPVDEDCVEEIVENFLENCGISDQNDQISTTSNANYAFGQGLYEYATRVSDAIVAVISGSIKKGIDEFLDKVYAAMSQIFAAWMPKIRAAFQWFENIKEVVKNWARTMHEKINCILVGMEDCLYMGAGLVAATCIVTLLEKFMVVTKILPAPCGAATLFLTTAMATISAAYVCTKAVEKSVMLTNVLHFVTTNCQIVLNALFNHDATKKELGANQNEGEAPTGVGQFGISTMLQDVANLMSTWSTNSVTEIGRTFGAISQIKNGILALRDMVYFVFEKLSDLAHKVLGFESQVLADLTILLGENVADWLSECDCMVSYMLEFNSRNREIFDRLSQLIEKGRLIRTGVLRTGHRGSSQVMALVTKALEKLIELHNSVVMSGSNTTRKAPFMVFFTGASGTGKTSVVQRVAINWLQEEQLGTNEIYSRNGQDPFWSGYKRHAVVTYDDFGAVPGTTSNEAEIINVISRNPYATVMAGLAEKGMYFDSRLVLASRNFLAANPESGVHDSEAYERRRHAVIRVSLKPGVPYNADDPCANQTYTLLDSKTPFREIQTFETYAELWSYLYTSFKEHEVQEELYLKSLPILDSDKKEALEGLVGLTVIATSFAPKAVMQYGMEKFPGHHFLVSDGEKCYFWHGDGSVESASVEQMQLSKQDVAQLKQQGLSTAMMYKDLAKAFPTLNSLAVLYAKNIVVKRWVGPDLEPTKTCEDVYMREQIGNLPKWQRAYLYVLSKYLTTQSPRGWFMECLEETKKNLRATYLWEYKQWPLPLKLALGSLIAIMAGGAIWYSLQSLWCMSGDASFVAGAATVFSVSSFAGQSDIPNRDNSERSFRNRKVRARTWQGQSSCFGDSALWIAETCMATLTFSNVRTQVCLAPGRGFFGVNHCLAAIPAGVMVKMDSSIGVTYFVWGKEKLLQFDGNEIALYMTSTLPKTVDSLLGRIHFDVETLPKTFSAVFFSYKYDPMIQQMVPELGSVTCKVHNKAYTLAHGEYRREIPQSLSYEASTVAGDCGSLILAEIEGKFKLVGMHVAFNGREGSASFMPYHASLDQKVGQGDFMLKYQEWAEPKILGPGCRAMGLIDPEHALAASGKTTFVETPEEWHLDYPCDKLPSVLARGDPRLAGTVHADYDPFASGMSKYAKEAGPFDAASLKQVCSGIVEIWEDASADFPMDEVDLDTAINGLENVEFFDALVLGTSEGFPYRLDRGPGDKGKSRYVSGESGSLKITDEGVLSDIAWFEEVSKTQVPDLYCIECVKDERLPIRKVLHEPKSRLFTVLPMSYNIVIRKKFLNFVRFFMKRRDVLTAQVGINPYSREWTRMANKLLSKGNNILCCDYSRFDGFLPKCIMNEIGNMIARLMKTDEVSRTQIKNLMLACTSRYAMCNRVLYRVENGIPSGFPLTVIVNSILNEILVKYAYWHCFEDNPSVQSNFDAHVSMVVYGDDNLISVSDAISSRFDGNFLVSFMEGLGIKVTDGIDKTKVGIEFRRLENCDFLKRSFKMSPDGTWRSPMSKESLWPQLHFVKAKKLEMAEAYINNCNNILRELWLHDVKEAEEFRNKVLRNLRWIGHEQLLNMQQLAVFHSEQMNGVSDFLSTCVTVDSIPLMDPLVPGMLPVKTSEIIPRVFVAAEKHFEGNFNDFFTISITTSRKFEEDKGFVLLFPYGAGRGGLPTTQFMRENVIRKGCSIQKKFRQAYEKGNNILFISQSSVVPSYVFAVMLLHSIGAISRLSSNKALTQAMQTCKRLEYLPKEYEEFF.

The SF3 helicase domain maps to 486–654; that stretch reads LEKLIELHNS…VPYNADDPCA (169 aa). Position 515 to 522 (515 to 522) interacts with ATP; the sequence is GASGTGKT. Residues 910 to 930 form a helical membrane-spanning segment; that stretch reads SLWCMSGDASFVAGAATVFSV. Ser937 is subject to O-(5'-phospho-RNA)-serine. One can recognise a Peptidase C3 domain in the interval 963-1165; sequence SSCFGDSALW…ASFMPYHASL (203 aa). Catalysis depends on for picornain 3C-like protease activity residues His1003, Glu1039, and Cys1128. In terms of domain architecture, RdRp catalytic spans 1445-1572; sequence NNILCCDYSR…SVSDAISSRF (128 aa).

In terms of processing, specific enzymatic cleavages by picornain 3C-like protease in vivo yield mature proteins. Picornain 3C-like protease is autocatalytically processed. Uridylylated by the polymerase and is covalently linked to the 5'-end of genomic RNA. This uridylylated form acts as a nucleotide-peptide primer for the polymerase.

The protein localises to the host membrane. It is found in the host cytoplasm. Its subcellular location is the host perinuclear region. The protein resides in the host endoplasmic reticulum. It catalyses the reaction RNA(n) + a ribonucleoside 5'-triphosphate = RNA(n+1) + diphosphate. In terms of biological role, thiol protease that cleaves the RNA1 and RNA2 polyproteins. Plays a role in RNA replication. It is covalently linked to the 5'terminus of both viral single-stranded RNA1 and RNA2 molecules. Its function is as follows. Down-regulates the RNA1 polyprotein processing and enhances trans-cleavage of RNA2 polyproteins. The protease cofactor and the putative helicase seem to target the replication complexes to ER membranes. Their physical association causes the membrane rearrangement of host ER that may result in formation of the small membranous vesicles that are the site of viral RNA synthesis. Functionally, the protease cofactor and the putative helicase seem to target the replication complexes to ER membranes. Their physical association causes the membrane rearrangement of host ER that may result in formation of the small membranous vesicles that are the site of viral RNA synthesis. In terms of biological role, replicates the viral genome. This chain is RNA1 polyprotein, found in Broad bean wilt virus 2 (BBWV-2).